Here is a 220-residue protein sequence, read N- to C-terminus: MRLRKKAWTNEFLNQHTYYLIKYDKKINLNEIFLNNNPTCLEIGCGKGQFLTTLALKNPNLNYIGMEKSSTITAIGLKKSLKEFQNNSKKMTNIKYLNKYAENLLEIFYTDSFSRIYLNFSDPWPKARHYKKRLTYLGFLDIYSDILIKNGFLEFKTDNDSLYNFTLEQLKLTNKWEIISNTLDLYNDQELLKDNVPTEYETKFHLANKNIYKIVIKNLK.

3 residues coordinate S-adenosyl-L-methionine: E42, E67, and D122. The active site involves D122. Substrate contacts are provided by residues K126, D158, and 198–201 (TEYE).

Belongs to the class I-like SAM-binding methyltransferase superfamily. TrmB family.

It catalyses the reaction guanosine(46) in tRNA + S-adenosyl-L-methionine = N(7)-methylguanosine(46) in tRNA + S-adenosyl-L-homocysteine. The protein operates within tRNA modification; N(7)-methylguanine-tRNA biosynthesis. In terms of biological role, catalyzes the formation of N(7)-methylguanine at position 46 (m7G46) in tRNA. The chain is tRNA (guanine-N(7)-)-methyltransferase from Mycoplasma capricolum subsp. capricolum (strain California kid / ATCC 27343 / NCTC 10154).